A 439-amino-acid polypeptide reads, in one-letter code: Fibroleukin (439 aa).

The signal sequence occupies residues 1-23; sequence MKLANWYWLSSAVLATYGFLVVA. An N-linked (GlcNAc...) asparagine glycan is attached at N25. Residues 73–165 adopt a coiled-coil conformation; sequence SRIEEVFKEV…GRLEKLNLVN (93 aa). The disordered stretch occupies residues 103–126; sequence ADDNGDPGRNGLLLPSTGAPGEVG. Residues N179, N235, N263, and N336 are each glycosylated (N-linked (GlcNAc...) asparagine). The Fibrinogen C-terminal domain maps to 204 to 436; sequence PVQHLIYKDC…EAKMMIRPKH (233 aa). C213 and C242 are disulfide-bonded. C371 and C384 are disulfide-bonded.

As to quaternary structure, homotetramer; disulfide-linked. Constitutively expressed in cytotoxic T-cells.

It localises to the secreted. Its function is as follows. May play a role in physiologic lymphocyte functions at mucosal sites. This is Fibroleukin (FGL2) from Homo sapiens (Human).